The chain runs to 147 residues: Formiminotransferase N-terminal subdomain-containing protein (147 aa).

The first 20 residues, 1 to 20 (MSSSRVGLRLAACLLNVSEA), serve as a signal peptide directing secretion.

This sequence belongs to the formiminotransferase family. In terms of tissue distribution, widely expressed with highest levels in liver and skeletal muscle, and moderate levels in kidney, bone and pancreas.

The protein is Formiminotransferase N-terminal subdomain-containing protein (FTCDNL1) of Homo sapiens (Human).